The following is a 315-amino-acid chain: Ornithine carbamoyltransferase, anabolic (315 aa).

Carbamoyl phosphate is bound by residues 57–60 (STRT), Gln-84, Arg-108, and 135–138 (HPCQ). L-ornithine is bound by residues Asn-166, Asp-230, and 234–235 (SM). Residues 270 to 271 (CL) and Arg-298 contribute to the carbamoyl phosphate site.

It belongs to the aspartate/ornithine carbamoyltransferase superfamily. OTCase family. In terms of assembly, homododecamer (tetramer of trimers).

It localises to the cytoplasm. The catalysed reaction is carbamoyl phosphate + L-ornithine = L-citrulline + phosphate + H(+). It participates in amino-acid biosynthesis; L-arginine biosynthesis; L-arginine from L-ornithine and carbamoyl phosphate: step 1/3. Inhibited by the bisubstrate delta-N-phosphonoacetyl-L-ornithine (PALO). Functionally, reversibly catalyzes the transfer of the carbamoyl group from carbamoyl phosphate (CP) to the N(epsilon) atom of ornithine (ORN) to produce L-citrulline, which is a substrate for argininosuccinate synthetase, the enzyme involved in the final step in arginine biosynthesis. The sequence is that of Ornithine carbamoyltransferase, anabolic from Pyrococcus furiosus (strain ATCC 43587 / DSM 3638 / JCM 8422 / Vc1).